The chain runs to 109 residues: Ig kappa chain V region S211 (109 aa).

The interval 1 to 23 is framework-1; the sequence is DVQMTQSPSYLAASPGESVSISC. Residues 24–35 form a complementarity-determining-1 region; that stretch reads KASNKSISNNLA. Positions 36-50 are framework-2; the sequence is WYZZKPGKANKLLIS. The interval 51 to 57 is complementarity-determining-2; that stretch reads SGSTLQS. The framework-3 stretch occupies residues 58–89; it reads GTPSRFSGSGSDTDFTLTIRSLEFQDFAVYYC. A complementarity-determining-3 region spans residues 90 to 98; the sequence is ZZYNEPYYT. Positions 99-108 are framework-4; sequence FGAGTMLELK.

The polypeptide is Ig kappa chain V region S211 (Rattus norvegicus (Rat)).